The primary structure comprises 407 residues: Actinorhodin polyketide putative beta-ketoacyl synthase 2 (407 aa).

Residues 1 to 402 (MSVLITGVGV…GFNSAAVLRR (402 aa)) form the Ketosynthase family 3 (KS3) domain.

The protein belongs to the thiolase-like superfamily. Beta-ketoacyl-ACP synthases family.

The polypeptide is Actinorhodin polyketide putative beta-ketoacyl synthase 2 (Streptomyces coelicolor (strain ATCC BAA-471 / A3(2) / M145)).